The following is a 622-amino-acid chain: 1-deoxy-D-xylulose-5-phosphate synthase (622 aa).

Residues H80 and 121-123 each bind thiamine diphosphate; that span reads GHS. A Mg(2+)-binding site is contributed by D152. Thiamine diphosphate contacts are provided by residues 153 to 154, N181, Y288, and E370; that span reads GA. N181 lines the Mg(2+) pocket.

It belongs to the transketolase family. DXPS subfamily. In terms of assembly, homodimer. Requires Mg(2+) as cofactor. It depends on thiamine diphosphate as a cofactor.

The enzyme catalyses D-glyceraldehyde 3-phosphate + pyruvate + H(+) = 1-deoxy-D-xylulose 5-phosphate + CO2. It functions in the pathway metabolic intermediate biosynthesis; 1-deoxy-D-xylulose 5-phosphate biosynthesis; 1-deoxy-D-xylulose 5-phosphate from D-glyceraldehyde 3-phosphate and pyruvate: step 1/1. In terms of biological role, catalyzes the acyloin condensation reaction between C atoms 2 and 3 of pyruvate and glyceraldehyde 3-phosphate to yield 1-deoxy-D-xylulose-5-phosphate (DXP). This is 1-deoxy-D-xylulose-5-phosphate synthase from Shewanella amazonensis (strain ATCC BAA-1098 / SB2B).